The sequence spans 488 residues: E3 ubiquitin-protein ligase TRIM34 (488 aa).

The RING-type zinc finger occupies 15-60 (CPICLELLTEPLSLDCGHSLCRACITVSNKEAVTSMGGKSSCPVCG). The segment at 92 to 134 (KKRDLCDHHGEKLLLFCKEDRKVICWLCERSQEHRGHHTVLTE) adopts a B box-type zinc-finger fold. Cys-97, His-100, Cys-119, and His-125 together coordinate Zn(2+). Positions 131 to 239 (VLTEEVFKEC…VRELISDVEC (109 aa)) form a coiled coil. The B30.2/SPRY domain occupies 283–488 (LSRMLQMFRE…APMTLCPPSS (206 aa)).

Belongs to the TRIM/RBCC family. Homotrimer. Interacts (via B-box and SPRY domain) with TRIM5. As to quaternary structure, (Microbial infection) Interacts (via the B30.2/SPRY domain) with HIV-1 capsid complexes. In terms of tissue distribution, is the most abundant form. It is highly expressed in the placenta, spleen, colon and peripheral blood leukocytes.

The protein resides in the cytoplasm. The protein localises to the mitochondrion. It carries out the reaction S-ubiquitinyl-[E2 ubiquitin-conjugating enzyme]-L-cysteine + [acceptor protein]-L-lysine = [E2 ubiquitin-conjugating enzyme]-L-cysteine + N(6)-ubiquitinyl-[acceptor protein]-L-lysine.. Its pathway is protein modification; protein ubiquitination. Functionally, functions as antiviral protein and contributes to the defense against retroviral infections. Acts as a capsid-specific restriction factor with the help of TRIM5 and prevents infection from non-host-adapted retroviruses. During influenza A virus infection, promotes programmed cell death by targeting ZBP1 for 'Lys-63'-linked polyubiquitination. In turn, promotes ZBP1 recruitment of RIPK3 to mediate virus-induced programmed necrosis. Negatively regulates the function of mitochondria by enhancing mitochondrial depolarization leading to cytochrome c release and mitochondria-dependent apoptosis. Also promotes the formation of multinucleated giant cells by means of cell fusion and phagocytosis in epithelial cells. In Homo sapiens (Human), this protein is E3 ubiquitin-protein ligase TRIM34 (TRIM34).